The following is a 59-amino-acid chain: Insulin (59 aa).

3 cysteine pairs are disulfide-bonded: Cys7–Cys45, Cys19–Cys58, and Cys44–Cys49.

Belongs to the insulin family. In terms of assembly, heterodimer of a B chain and an A chain linked by two disulfide bonds.

It is found in the secreted. Functionally, insulin decreases blood glucose concentration. It increases cell permeability to monosaccharides, amino acids and fatty acids. It accelerates glycolysis, the pentose phosphate cycle, and glycogen synthesis in liver. This is Insulin (ins) from Chimaera monstrosa (Rabbit fish).